Consider the following 610-residue polypeptide: Zinc metalloproteinase-disintegrin-like 3a (610 aa).

The signal sequence occupies residues 1–19 (MIQVLLVTILAVFPYQGSS). A propeptide spanning residues 20-188 (IILGSGNVND…KKASQLVVTA (169 aa)) is cleaved from the precursor. Positions 198–394 (RYVELVIVAD…YTPKCILNEP (197 aa)) constitute a Peptidase M12B domain. Glu201 contacts Ca(2+). N-linked (GlcNAc...) asparagine glycosylation is present at Asn217. Asp285 is a binding site for Ca(2+). Cystine bridges form between Cys309–Cys389, Cys349–Cys373, and Cys351–Cys356. Residue His334 coordinates Zn(2+). Residue Glu335 is part of the active site. Residues His338 and His344 each contribute to the Zn(2+) site. 7 residues coordinate Ca(2+): Cys389, Asn392, Val404, Asn407, Glu411, Glu414, and Asp417. The Disintegrin domain occupies 402–488 (PPVCGNELLE…DCPTDDFHKN (87 aa)). 14 disulfides stabilise this stretch: Cys405–Cys434, Cys416–Cys429, Cys418–Cys424, Cys428–Cys451, Cys442–Cys448, Cys447–Cys473, Cys460–Cys480, Cys467–Cys499, Cys492–Cys504, Cys511–Cys561, Cys526–Cys572, Cys539–Cys549, Cys556–Cys598, and Cys592–Cys603. Residues 466-468 (ECD) carry the D/ECD-tripeptide motif.

The protein belongs to the venom metalloproteinase (M12B) family. P-III subfamily. Zn(2+) is required as a cofactor. In terms of tissue distribution, expressed by the venom gland.

It localises to the secreted. Functionally, snake venom metalloproteinase that impairs hemostasis in the envenomed animal. This chain is Zinc metalloproteinase-disintegrin-like 3a, found in Crotalus adamanteus (Eastern diamondback rattlesnake).